The sequence spans 137 residues: Small ribosomal subunit protein bS18c (137 aa).

The protein belongs to the bacterial ribosomal protein bS18 family. In terms of assembly, part of the 30S ribosomal subunit.

The protein resides in the plastid. The protein localises to the chloroplast. In Chlamydomonas reinhardtii (Chlamydomonas smithii), this protein is Small ribosomal subunit protein bS18c (rps18).